A 161-amino-acid polypeptide reads, in one-letter code: RNA pyrophosphohydrolase (161 aa).

One can recognise a Nudix hydrolase domain in the interval 12 to 154; it reads PYRPGVGMMI…KRKLYQAVVK (143 aa). Positions 46–67 match the Nudix box motif; it reads GGIVPGETPSIAAMREMLEEIG.

This sequence belongs to the Nudix hydrolase family. RppH subfamily. The cofactor is a divalent metal cation.

Functionally, accelerates the degradation of transcripts by removing pyrophosphate from the 5'-end of triphosphorylated RNA, leading to a more labile monophosphorylated state that can stimulate subsequent ribonuclease cleavage. The protein is RNA pyrophosphohydrolase of Rickettsia bellii (strain OSU 85-389).